The sequence spans 279 residues: Probable nicotinate-nucleotide pyrophosphorylase [carboxylating] (279 aa).

Residues R90, 125–127, R149, K159, E189, D210, 238–240, and 259–261 each bind substrate; these read TRK, SGG, and MGF.

This sequence belongs to the NadC/ModD family. Hexamer formed by 3 homodimers.

The enzyme catalyses nicotinate beta-D-ribonucleotide + CO2 + diphosphate = quinolinate + 5-phospho-alpha-D-ribose 1-diphosphate + 2 H(+). Its pathway is cofactor biosynthesis; NAD(+) biosynthesis; nicotinate D-ribonucleotide from quinolinate: step 1/1. Involved in the catabolism of quinolinic acid (QA). This is Probable nicotinate-nucleotide pyrophosphorylase [carboxylating] (nadC) from Methanothermobacter thermautotrophicus (strain ATCC 29096 / DSM 1053 / JCM 10044 / NBRC 100330 / Delta H) (Methanobacterium thermoautotrophicum).